A 253-amino-acid polypeptide reads, in one-letter code: 5'-nucleotidase SurE (253 aa).

4 residues coordinate a divalent metal cation: D8, D9, S40, and N97.

It belongs to the SurE nucleotidase family. A divalent metal cation serves as cofactor.

The protein localises to the cytoplasm. The enzyme catalyses a ribonucleoside 5'-phosphate + H2O = a ribonucleoside + phosphate. In terms of biological role, nucleotidase that shows phosphatase activity on nucleoside 5'-monophosphates. This chain is 5'-nucleotidase SurE, found in Desulforamulus reducens (strain ATCC BAA-1160 / DSM 100696 / MI-1) (Desulfotomaculum reducens).